The primary structure comprises 440 residues: Thymidine phosphorylase (440 aa).

The protein belongs to the thymidine/pyrimidine-nucleoside phosphorylase family. In terms of assembly, homodimer.

It carries out the reaction thymidine + phosphate = 2-deoxy-alpha-D-ribose 1-phosphate + thymine. It functions in the pathway pyrimidine metabolism; dTMP biosynthesis via salvage pathway; dTMP from thymine: step 1/2. In terms of biological role, the enzymes which catalyze the reversible phosphorolysis of pyrimidine nucleosides are involved in the degradation of these compounds and in their utilization as carbon and energy sources, or in the rescue of pyrimidine bases for nucleotide synthesis. This chain is Thymidine phosphorylase, found in Salmonella arizonae (strain ATCC BAA-731 / CDC346-86 / RSK2980).